The sequence spans 157 residues: Transcription elongation factor GreA (157 aa).

A coiled-coil region spans residues 14-37; that stretch reads LRKELERLLKRRPLITEAIAEARE.

The protein belongs to the GreA/GreB family.

Its function is as follows. Necessary for efficient RNA polymerase transcription elongation past template-encoded arresting sites. The arresting sites in DNA have the property of trapping a certain fraction of elongating RNA polymerases that pass through, resulting in locked ternary complexes. Cleavage of the nascent transcript by cleavage factors such as GreA or GreB allows the resumption of elongation from the new 3'terminus. GreA releases sequences of 2 to 3 nucleotides. This Vibrio vulnificus (strain CMCP6) protein is Transcription elongation factor GreA.